The primary structure comprises 382 residues: Dual-specificity RNA methyltransferase RlmN (382 aa).

Glu91 (proton acceptor) is an active-site residue. One can recognise a Radical SAM core domain in the interval Glu97 to Asp339. Cysteines 104 and 344 form a disulfide. Positions 111, 115, and 118 each coordinate [4Fe-4S] cluster. S-adenosyl-L-methionine is bound by residues Gly165 to Glu166, Ser197, Ser219 to His221, and Asn301. Cys344 acts as the S-methylcysteine intermediate in catalysis.

The protein belongs to the radical SAM superfamily. RlmN family. It depends on [4Fe-4S] cluster as a cofactor.

Its subcellular location is the cytoplasm. It catalyses the reaction adenosine(2503) in 23S rRNA + 2 reduced [2Fe-2S]-[ferredoxin] + 2 S-adenosyl-L-methionine = 2-methyladenosine(2503) in 23S rRNA + 5'-deoxyadenosine + L-methionine + 2 oxidized [2Fe-2S]-[ferredoxin] + S-adenosyl-L-homocysteine. The catalysed reaction is adenosine(37) in tRNA + 2 reduced [2Fe-2S]-[ferredoxin] + 2 S-adenosyl-L-methionine = 2-methyladenosine(37) in tRNA + 5'-deoxyadenosine + L-methionine + 2 oxidized [2Fe-2S]-[ferredoxin] + S-adenosyl-L-homocysteine. Specifically methylates position 2 of adenine 2503 in 23S rRNA and position 2 of adenine 37 in tRNAs. m2A2503 modification seems to play a crucial role in the proofreading step occurring at the peptidyl transferase center and thus would serve to optimize ribosomal fidelity. The protein is Dual-specificity RNA methyltransferase RlmN of Polaromonas naphthalenivorans (strain CJ2).